The sequence spans 97 residues: YcgL domain-containing protein PSEEN4034 (97 aa).

The YcgL domain maps to 3-87 (RICSIYKSPR…PDDDYIEHLP (85 aa)).

The protein is YcgL domain-containing protein PSEEN4034 of Pseudomonas entomophila (strain L48).